The sequence spans 181 residues: Translationally-controlled tumor protein homolog (181 aa).

Residues 1–181 (MLIFKDAFTD…VKEALIEEKQ (181 aa)) form the TCTP domain.

The protein belongs to the TCTP family.

Its subcellular location is the cytoplasm. In terms of biological role, involved in calcium binding and microtubule stabilization. The polypeptide is Translationally-controlled tumor protein homolog (Brugia malayi (Filarial nematode worm)).